Consider the following 68-residue polypeptide: Acylphosphatase (68 aa).

The 66-residue stretch at R3–P68 folds into the Acylphosphatase-like domain. Residues R18 and N36 contribute to the active site.

It belongs to the acylphosphatase family.

It catalyses the reaction an acyl phosphate + H2O = a carboxylate + phosphate + H(+). The polypeptide is Acylphosphatase (acyP) (Oleidesulfovibrio alaskensis (strain ATCC BAA-1058 / DSM 17464 / G20) (Desulfovibrio alaskensis)).